Here is a 323-residue protein sequence, read N- to C-terminus: MSDRPAARRWGKCGPLCTRESIMVAFKGVWTQTFWKAVTAEFLAMLIFVLLSLGSTINWGGAEKPLPVDMVLISLCFGLSIATMVQCFGHISGGHINPAVTVAMVCTRRISIAKSVFYIAAQCLGAIIGAGILYLVTPPSVVGGLGVTTVHGNLSAGHGLLVELIITFQLVFTIFASCDSKRTDVTGSIALAIGISVAIGHLFAINYTGASMNPARSFGPAVIMGNWENHWIYWVGPIIGAVLAGGLYEYVFCPDVELKRRFKEAFSKAAQQTKGSYMEVEDNRSQVETDDLILKPGVVHVIDIDRGEEKKGKDPSGEVLSSV.

Residues 1–36 lie on the Cytoplasmic side of the membrane; sequence MSDRPAARRWGKCGPLCTRESIMVAFKGVWTQTFWK. Residues Cys-13 and Cys-17 are each lipidated (S-palmitoyl cysteine). Residues 37-57 form a helical membrane-spanning segment; the sequence is AVTAEFLAMLIFVLLSLGSTI. The Extracellular segment spans residues 58–69; sequence NWGGAEKPLPVD. The chain crosses the membrane as a helical span at residues 70-89; that stretch reads MVLISLCFGLSIATMVQCFG. Over 90-93 the chain is Cytoplasmic; that stretch reads HISG. The discontinuously helical intramembrane region spans 94 to 101; it reads GHINPAVT. Residues 97-99 carry the NPA 1 motif; sequence NPA. Over 102–115 the chain is Cytoplasmic; it reads VAMVCTRRISIAKS. A Phosphoserine; by PKG modification is found at Ser-111. The helical transmembrane segment at 116-136 threads the bilayer; sequence VFYIAAQCLGAIIGAGILYLV. Over 137–155 the chain is Extracellular; sequence TPPSVVGGLGVTTVHGNLS. N-linked (GlcNAc...) asparagine glycosylation is present at Asn-153. Residues 156–176 form a helical membrane-spanning segment; the sequence is AGHGLLVELIITFQLVFTIFA. At 177 to 184 the chain is on the cytoplasmic side; sequence SCDSKRTD. Ser-180 is subject to Phosphoserine; by PKC. The chain crosses the membrane as a helical span at residues 185–205; that stretch reads VTGSIALAIGISVAIGHLFAI. A glycan (N-linked (GlcNAc...) asparagine) is linked at Asn-206. The Extracellular segment spans residues 206–208; it reads NYT. Residues 209–222 constitute an intramembrane region (discontinuously helical); that stretch reads GASMNPARSFGPAV. Positions 213–215 match the NPA 2 motif; it reads NPA. The Extracellular segment spans residues 223–231; it reads IMGNWENHW. A helical membrane pass occupies residues 232-252; it reads IYWVGPIIGAVLAGGLYEYVF. Residues 253–323 are Cytoplasmic-facing; the sequence is CPDVELKRRF…DPSGEVLSSV (71 aa). Residues Ser-276 and Ser-285 each carry the phosphoserine modification. At Thr-289 the chain carries Phosphothreonine. Ser-321 is subject to Phosphoserine.

This sequence belongs to the MIP/aquaporin (TC 1.A.8) family. As to quaternary structure, homotetramer. The tetramers can form oligomeric arrays in membranes. The size of the oligomers differs between tissues and is smaller in skeletal muscle than in brain. Interaction between AQP4 oligomeric arrays in close-by cells can contribute to cell-cell adhesion. Part of a complex containing MLC1, TRPV4, HEPACAM and ATP1B1. Post-translationally, phosphorylation by PKC at Ser-180 reduces conductance by 50%. Phosphorylation by PKG at Ser-111 in response to glutamate increases conductance by 40%. In terms of processing, isoform 2: Palmitoylated on its N-terminal region. Isoform 1: Not palmitoylated. In terms of tissue distribution, detected in brain and lung.

The protein resides in the cell membrane. The protein localises to the basolateral cell membrane. It is found in the endosome membrane. It localises to the sarcolemma. Its subcellular location is the cell projection. The catalysed reaction is H2O(in) = H2O(out). Forms a water-specific channel. Plays an important role in brain water homeostasis and in glymphatic solute transport. Required for a normal rate of water exchange across the blood brain interface. Required for normal levels of cerebrospinal fluid influx into the brain cortex and parenchyma along paravascular spaces that surround penetrating arteries, and for normal drainage of interstitial fluid along paravenous drainage pathways. Thereby, it is required for normal clearance of solutes from the brain interstitial fluid, including soluble beta-amyloid peptides derived from APP. Plays a redundant role in urinary water homeostasis and urinary concentrating ability. The sequence is that of Aquaporin-4 (AQP4) from Bos taurus (Bovine).